Consider the following 945-residue polypeptide: Isoleucine--tRNA ligase (945 aa).

A 'HIGH' region motif is present at residues 66–76 (PYANGDIHLGH). Glu-581 contributes to the L-isoleucyl-5'-AMP binding site. The 'KMSKS' region signature appears at 622–626 (KMSKS). Residue Lys-625 coordinates ATP. Positions 908, 911, 928, and 931 each coordinate Zn(2+).

The protein belongs to the class-I aminoacyl-tRNA synthetase family. IleS type 1 subfamily. Monomer. Requires Zn(2+) as cofactor.

Its subcellular location is the cytoplasm. It catalyses the reaction tRNA(Ile) + L-isoleucine + ATP = L-isoleucyl-tRNA(Ile) + AMP + diphosphate. Its function is as follows. Catalyzes the attachment of isoleucine to tRNA(Ile). As IleRS can inadvertently accommodate and process structurally similar amino acids such as valine, to avoid such errors it has two additional distinct tRNA(Ile)-dependent editing activities. One activity is designated as 'pretransfer' editing and involves the hydrolysis of activated Val-AMP. The other activity is designated 'posttransfer' editing and involves deacylation of mischarged Val-tRNA(Ile). The protein is Isoleucine--tRNA ligase of Burkholderia cenocepacia (strain ATCC BAA-245 / DSM 16553 / LMG 16656 / NCTC 13227 / J2315 / CF5610) (Burkholderia cepacia (strain J2315)).